The chain runs to 402 residues: Thyroid hormone receptor alpha (402 aa).

A disordered region spans residues 1 to 22 (MEQKPSTLDPLSEPEDTRWLDG). The interval 1 to 50 (MEQKPSTLDPLSEPEDTRWLDGKRKRKSSQCLVKSSMSGYIPSYLDKDEQ) is modulating. The residue at position 12 (Ser12) is a Phosphoserine; by CK2. Ser28 bears the Phosphoserine mark. Residues Cys51, Cys54, Cys68, Cys71, Cys89, Cys95, Cys105, and Cys108 each contribute to the Zn(2+) site. NR C4-type zinc fingers lie at residues 51-71 (CVVCGDKATGYHYRCITCAGC) and 89-113 (CKYDGCCVIDKITRNQCQLCRFKKC). Positions 51-125 (CVVCGDKATG…VGMAMDLVLY (75 aa)) form a DNA-binding region, nuclear receptor. In terms of domain architecture, NR LBD spans 161-402 (EEWELIHVVT…ELFPPLFLEV (242 aa)). Arg226 and Ser275 together coordinate 3,3',5-triiodo-L-thyronine.

It belongs to the nuclear hormone receptor family. NR1 subfamily. Probably interacts with SFPQ.

It localises to the nucleus. Nuclear hormone receptor that can act as a repressor or activator of transcription. High affinity receptor for thyroid hormones, including triiodothyronine and thyroxine. The protein is Thyroid hormone receptor alpha (THRA) of Pygoscelis adeliae (Adelie penguin).